The primary structure comprises 241 residues: Polyol phosphate phosphatase PYP1 (241 aa).

Residue Asp9 is the Nucleophile of the active site. Mg(2+) contacts are provided by Asp9, Asp11, and Asp179. The active-site Proton donor is the Asp11.

The protein belongs to the HAD-like hydrolase superfamily. Requires Mg(2+) as cofactor.

The protein localises to the cytoplasm. Its subcellular location is the nucleus. The enzyme catalyses D-ribitol 5-phosphate + H2O = ribitol + phosphate. The catalysed reaction is D-sorbitol 6-phosphate + H2O = D-sorbitol + phosphate. It carries out the reaction sn-glycerol 1-phosphate + H2O = glycerol + phosphate. It catalyses the reaction D-erythrose 4-phosphate + H2O = D-erythrose + phosphate. In terms of biological role, hydrolyzes sugar alcohol (polyol) phosphates. Dephosphorylates a variety of substrates, including: sn-glycerol 1-phosphate (D-glycerol 3-phosphate), D-ribitol 5-phosphate, D-sorbitol 6-phosphate (D-glucitol 6-phosphate), and D-erythrose 4-phosphate. Prevents accumulation of toxic levels of polyol phosphates, which can impair glycolysis by inhibiting glucose-6-phosphate isomerase. In Saccharomyces cerevisiae (strain ATCC 204508 / S288c) (Baker's yeast), this protein is Polyol phosphate phosphatase PYP1.